We begin with the raw amino-acid sequence, 1049 residues long: RIMS-binding protein 2 (1049 aa).

The 68-residue stretch at 164 to 231 folds into the SH3 1 domain; sequence GKVHLCVARY…PSNFVDFIQD (68 aa). Fibronectin type-III domains are found at residues 294–387, 390–471, and 486–587; these read VPYP…GKDV, APSQ…EKDE, and PPQD…VPPA. Disordered stretches follow at residues 580–664, 694–714, and 728–750; these read PDLL…VSTT, SAGP…EVKR, and LGQQ…GSDL. Residues 582-598 are compositionally biased toward pro residues; the sequence is LLVPPAPHPRTAPPPKP. A compositionally biased stretch (basic and acidic residues) spans 603 to 616; that stretch reads MDTKDLGPHVKVDE. The segment covering 641–651 has biased composition (low complexity); sequence GPGRRSPSPSR. Ser-701 and Ser-709 each carry phosphoserine. A compositionally biased stretch (basic and acidic residues) spans 735–746; sequence CHGDEYHTESSR. 2 positions are modified to phosphoserine: Ser-832 and Ser-839. A Phosphothreonine modification is found at Thr-841. SH3 domains follow at residues 848–916 and 952–1019; these read LPAR…EIHA and VPTR…EVPD. The interval 1024–1049 is disordered; that stretch reads HLSDAPPHYSHDPPMRTKAKRVSQPP. Over residues 1040–1049 the composition is skewed to basic residues; it reads TKAKRVSQPP.

It belongs to the RIMBP family. Interacts with CACNA1D and CACNA1B, and potentially with other Ca(2+) channel alpha-1 isoforms. Interacts with RIMS1 and RIMS2.

The protein resides in the cell membrane. The protein localises to the synapse. Its function is as follows. Plays a role in the synaptic transmission as bifunctional linker that interacts simultaneously with RIMS1, RIMS2, CACNA1D and CACNA1B. The sequence is that of RIMS-binding protein 2 (Rimbp2) from Rattus norvegicus (Rat).